The sequence spans 133 residues: Ribonuclease P protein component (133 aa).

It belongs to the RnpA family. In terms of assembly, consists of a catalytic RNA component (M1 or rnpB) and a protein subunit.

It catalyses the reaction Endonucleolytic cleavage of RNA, removing 5'-extranucleotides from tRNA precursor.. Its function is as follows. RNaseP catalyzes the removal of the 5'-leader sequence from pre-tRNA to produce the mature 5'-terminus. It can also cleave other RNA substrates such as 4.5S RNA. The protein component plays an auxiliary but essential role in vivo by binding to the 5'-leader sequence and broadening the substrate specificity of the ribozyme. This chain is Ribonuclease P protein component, found in Pseudomonas entomophila (strain L48).